Reading from the N-terminus, the 1163-residue chain is E3 ubiquitin-protein ligase TRIM33 (1163 aa).

The tract at residues 1-119 (MEVEASGTED…ASTSSSSSTP (119 aa)) is disordered. The span at 27–38 (TETKEAADEAKS) shows a compositional bias: basic and acidic residues. Positions 45 to 54 (TPTTSSDSSS) are enriched in low complexity. Over residues 72 to 87 (DPPPPPPPPPPPPPST) the composition is skewed to pro residues. Over residues 88 to 99 (PADSTAAAASPA) the composition is skewed to low complexity. The RING-type zinc-finger motif lies at 129-188 (CAVCKQSLQNRDCEPKLLPCLHSFCLKCIPQPDRKITMPVQGPHGQDTRIVNVMRCTVCH). The B box-type 1; atypical zinc finger occupies 215–268 (NSTQVCTSCEDNASAIGFCVECGEWLCKTCIEAHQRVKFTKDHKIRKKEEVSPE). Cys220, Cys223, Cys244, His257, Cys280, His283, Cys303, and His308 together coordinate Zn(2+). Residues 275–316 (QRPVFCPVHKQEALKLFCETCDTLTCRDCQLLEHKEHRYQFL) form a B box-type 2 zinc finger. The stretch at 345–369 (ASEVQKRLKEVAETHKKVEHEIKIA) forms a coiled coil. Residues 524-533 (MQQAAIAQKH) show a composition bias toward low complexity. Disordered regions lie at residues 524-555 (MQQA…QQQQ), 575-599 (QIQQ…QMIQ), 656-706 (LQRQ…VITP), 753-848 (TVGP…PLPI), and 867-918 (NVKS…KEDD). The span at 534–548 (QQQHQHHQQQQHQHQ) shows a compositional bias: basic residues. Over residues 580–590 (MRIASQMSQHP) the composition is skewed to polar residues. Composition is skewed to low complexity over residues 678–691 (SAAN…ASMA) and 753–797 (TVGP…SGTT). Residues 821–830 (KTERTKDGRR) show a composition bias toward basic and acidic residues. The segment covering 870–889 (SEPQSDNLSSCTNPNSRATL) has biased composition (polar residues). The PHD-type zinc-finger motif lies at 921–968 (EDWCAVCQNGGELLCCDHCPKVFHITCHIPTLKSSPSGDWMCTFCRNL). In terms of domain architecture, Bromo spans 991 to 1114 (AMSPEEQRRC…LYFEERLLEI (124 aa)). The tract at residues 1128–1147 (TQIEAEKEDSDDSDDDIIQP) is disordered. Over residues 1133 to 1144 (EKEDSDDSDDDI) the composition is skewed to acidic residues.

The protein resides in the nucleus. The enzyme catalyses S-ubiquitinyl-[E2 ubiquitin-conjugating enzyme]-L-cysteine + [acceptor protein]-L-lysine = [E2 ubiquitin-conjugating enzyme]-L-cysteine + N(6)-ubiquitinyl-[acceptor protein]-L-lysine.. It functions in the pathway protein modification; protein ubiquitination. In terms of biological role, may act as an E3 ubiquitin-protein ligase and a transcriptional repressor. Involved in the regulation of embryonic and adult hematopoiesis. Required for normal development and survival of both committed erythroid progenitor cells and posterior mesenchymal cells. This Danio rerio (Zebrafish) protein is E3 ubiquitin-protein ligase TRIM33 (trim33).